A 621-amino-acid chain; its full sequence is uncharacterized protein (621 aa).

The protein resides in the plastid. Its subcellular location is the chloroplast. This is an uncharacterized protein from Porphyra purpurea (Red seaweed).